The primary structure comprises 529 residues: Bifunctional purine biosynthesis protein PurH (529 aa).

The MGS-like domain occupies 1 to 148 (MQQRRPIRRA…KNHKDVAIVV (148 aa)).

It belongs to the PurH family.

It catalyses the reaction (6R)-10-formyltetrahydrofolate + 5-amino-1-(5-phospho-beta-D-ribosyl)imidazole-4-carboxamide = 5-formamido-1-(5-phospho-D-ribosyl)imidazole-4-carboxamide + (6S)-5,6,7,8-tetrahydrofolate. The enzyme catalyses IMP + H2O = 5-formamido-1-(5-phospho-D-ribosyl)imidazole-4-carboxamide. Its pathway is purine metabolism; IMP biosynthesis via de novo pathway; 5-formamido-1-(5-phospho-D-ribosyl)imidazole-4-carboxamide from 5-amino-1-(5-phospho-D-ribosyl)imidazole-4-carboxamide (10-formyl THF route): step 1/1. It participates in purine metabolism; IMP biosynthesis via de novo pathway; IMP from 5-formamido-1-(5-phospho-D-ribosyl)imidazole-4-carboxamide: step 1/1. The protein is Bifunctional purine biosynthesis protein PurH of Pectobacterium atrosepticum (strain SCRI 1043 / ATCC BAA-672) (Erwinia carotovora subsp. atroseptica).